We begin with the raw amino-acid sequence, 441 residues long: Probable tRNA pseudouridine synthase D (441 aa).

The active-site Nucleophile is the D89. The 226-residue stretch at 168–393 (GVPNFFGVQR…SKGTRREVLL (226 aa)) folds into the TRUD domain.

The protein belongs to the pseudouridine synthase TruD family.

It catalyses the reaction uridine(13) in tRNA = pseudouridine(13) in tRNA. Could be responsible for synthesis of pseudouridine from uracil-13 in transfer RNAs. In Methanosarcina acetivorans (strain ATCC 35395 / DSM 2834 / JCM 12185 / C2A), this protein is Probable tRNA pseudouridine synthase D.